Reading from the N-terminus, the 206-residue chain is Large ribosomal subunit protein bL25 (206 aa).

The tract at residues 184–206 (AEEAAAEVAEPEVIKKGKEEEEE) is disordered. Residues 195–206 (EVIKKGKEEEEE) are compositionally biased toward basic and acidic residues.

Belongs to the bacterial ribosomal protein bL25 family. CTC subfamily. As to quaternary structure, part of the 50S ribosomal subunit; part of the 5S rRNA/L5/L18/L25 subcomplex. Contacts the 5S rRNA. Binds to the 5S rRNA independently of L5 and L18.

This is one of the proteins that binds to the 5S RNA in the ribosome where it forms part of the central protuberance. This is Large ribosomal subunit protein bL25 from Thermus thermophilus (strain ATCC BAA-163 / DSM 7039 / HB27).